We begin with the raw amino-acid sequence, 306 residues long: tRNA pseudouridine synthase B (306 aa).

Asp-48 serves as the catalytic Nucleophile.

Belongs to the pseudouridine synthase TruB family. Type 1 subfamily.

It catalyses the reaction uridine(55) in tRNA = pseudouridine(55) in tRNA. Functionally, responsible for synthesis of pseudouridine from uracil-55 in the psi GC loop of transfer RNAs. The protein is tRNA pseudouridine synthase B of Haemophilus influenzae (strain 86-028NP).